Consider the following 460-residue polypeptide: Mercuric reductase (460 aa).

Residues 1 to 65 (MTHLKITGMT…AVAGLGYKAM (65 aa)) form the HMA domain. A metal cation is bound by residues C11 and C14. Residues A110, G130, and T135 each contribute to the FAD site. C136 and C141 are joined by a disulfide. FAD-binding residues include K145 and A211. 2 residues coordinate Hg(2+): C457 and C458.

Belongs to the class-I pyridine nucleotide-disulfide oxidoreductase family. As to quaternary structure, homodimer. FAD serves as cofactor.

It carries out the reaction Hg + NADP(+) + H(+) = Hg(2+) + NADPH. Its function is as follows. Resistance to Hg(2+) in bacteria appears to be governed by a specialized system which includes mercuric reductase. MerA protein is responsible for volatilizing mercury as Hg(0). This chain is Mercuric reductase (merA), found in Serratia marcescens.